Reading from the N-terminus, the 167-residue chain is Acetolactate synthase small subunit (167 aa).

In terms of domain architecture, ACT spans 7-81 (TLSVLVEAKP…NVIKIVELED (75 aa)).

It belongs to the acetolactate synthase small subunit family. Dimer of large and small chains.

It carries out the reaction 2 pyruvate + H(+) = (2S)-2-acetolactate + CO2. The protein operates within amino-acid biosynthesis; L-isoleucine biosynthesis; L-isoleucine from 2-oxobutanoate: step 1/4. It functions in the pathway amino-acid biosynthesis; L-valine biosynthesis; L-valine from pyruvate: step 1/4. The polypeptide is Acetolactate synthase small subunit (ilvH) (Mycobacterium avium).